We begin with the raw amino-acid sequence, 525 residues long: GMP synthase [glutamine-hydrolyzing] (525 aa).

The 199-residue stretch at 9-207 (RILILDFGSQ…VRDICQCEAL (199 aa)) folds into the Glutamine amidotransferase type-1 domain. The active-site Nucleophile is the cysteine 86. Residues histidine 181 and glutamate 183 contribute to the active site. Positions 208–400 (WTPAKIIDDA…LGLPYDMLYR (193 aa)) constitute a GMPS ATP-PPase domain. Residue 235 to 241 (SGGVDSS) participates in ATP binding.

In terms of assembly, homodimer.

It carries out the reaction XMP + L-glutamine + ATP + H2O = GMP + L-glutamate + AMP + diphosphate + 2 H(+). It participates in purine metabolism; GMP biosynthesis; GMP from XMP (L-Gln route): step 1/1. Functionally, catalyzes the synthesis of GMP from XMP. In Salmonella typhi, this protein is GMP synthase [glutamine-hydrolyzing].